The primary structure comprises 271 residues: Phosphate import ATP-binding protein PstB (271 aa).

Residues 25–266 form the ABC transporter domain; that stretch reads VDVRQLSLWY…PKHPYTEAYI (242 aa). Residue 57–64 participates in ATP binding; sequence GPSGCGKS.

The protein belongs to the ABC transporter superfamily. Phosphate importer (TC 3.A.1.7) family. As to quaternary structure, the complex is composed of two ATP-binding proteins (PstB), two transmembrane proteins (PstC and PstA) and a solute-binding protein (PstS).

Its subcellular location is the cell inner membrane. The catalysed reaction is phosphate(out) + ATP + H2O = ADP + 2 phosphate(in) + H(+). Part of the ABC transporter complex PstSACB involved in phosphate import. Responsible for energy coupling to the transport system. This chain is Phosphate import ATP-binding protein PstB, found in Thermus thermophilus (strain ATCC BAA-163 / DSM 7039 / HB27).